Consider the following 1219-residue polypeptide: Pleckstrin homology domain-containing family G member 3 (1219 aa).

The span at 1–10 (MPVSTSLHQD) shows a compositional bias: polar residues. The tract at residues 1–66 (MPVSTSLHQD…HLPNSNNNSS (66 aa)) is disordered. Residues 18–46 (SLTSTTSSSGSSCDSRSAMEEPSSSEAPA) are compositionally biased toward low complexity. S76 bears the Phosphoserine mark. The 180-residue stretch at 93-272 (YLGRVVREIV…TCVAWYINDM (180 aa)) folds into the DH domain. One can recognise a PH domain in the interval 296–394 (DLTTYGELVL…WTHHIKRLIL (99 aa)). A compositionally biased stretch (polar residues) spans 431–442 (WSSQDEVSTNVR). 2 disordered regions span residues 431 to 599 (WSSQ…PSVL) and 613 to 708 (FSRR…KESA). Position 433 is a phosphoserine (S433). The segment covering 446–463 (RQSEPTKHLLRQLNEKAR) has biased composition (basic and acidic residues). 7 positions are modified to phosphoserine: S576, S577, S618, S631, S640, S643, and S647. A compositionally biased stretch (low complexity) spans 630-645 (GSPRLVSRSSSVLSLE). Positions 696–708 (EPDRSSCKKKESA) are enriched in basic and acidic residues. Residues S741, S779, and S827 each carry the phosphoserine modification. Disordered regions lie at residues 756 to 780 (RFNSLPRPDPEPVPPVGSKRQVGSR), 821 to 840 (MESSGGSPGKGPGQGQANGF), 859 to 878 (EESATASPESSSPTEGRSPA), 955 to 1133 (APER…LYVT), and 1146 to 1207 (VMEK…RVRN). The span at 826–836 (GSPGKGPGQGQ) shows a compositional bias: gly residues. Residues 859–873 (EESATASPESSSPTE) are compositionally biased toward low complexity. 5 positions are modified to phosphoserine: S962, S1011, S1023, S1037, and S1040. The segment covering 1020–1029 (SAVSQRTTSP) has biased composition (polar residues). Residues 1049–1065 (DVRELCSKYASRDEARR) are compositionally biased toward basic and acidic residues. S1081 carries the post-translational modification Phosphoserine. R1107 carries the post-translational modification Omega-N-methylarginine. The span at 1187–1197 (QPKEEGSRDPA) shows a compositional bias: basic and acidic residues.

It is found in the cytoplasm. Its subcellular location is the cytoskeleton. Functionally, plays a role in controlling cell polarity and cell motility by selectively binding newly polymerized actin and activating RAC1 and CDC42 to enhance local actin polymerization. The sequence is that of Pleckstrin homology domain-containing family G member 3 from Homo sapiens (Human).